Reading from the N-terminus, the 532-residue chain is uncharacterized protein (532 aa).

5 consecutive transmembrane segments (helical) span residues 11-31 (YLSH…ALII), 51-71 (IEPF…KIFF), 126-146 (LIDI…YTLW), 147-167 (ILYN…IIVF), and 231-253 (YVES…VLLI). Residues 315 to 531 (ICINKLVYEY…MIIPMNNGII (217 aa)) form the ABC transporter domain. 349 to 356 (GKSGSGKS) is an ATP binding site.

It is found in the membrane. This is an uncharacterized protein from Acanthamoeba polyphaga mimivirus (APMV).